Reading from the N-terminus, the 241-residue chain is Ribonuclease PH (241 aa).

Phosphate is bound by residues arginine 89 and 127–129 (GTR).

It belongs to the RNase PH family. As to quaternary structure, homohexameric ring arranged as a trimer of dimers.

The catalysed reaction is tRNA(n+1) + phosphate = tRNA(n) + a ribonucleoside 5'-diphosphate. Its function is as follows. Phosphorolytic 3'-5' exoribonuclease that plays an important role in tRNA 3'-end maturation. Removes nucleotide residues following the 3'-CCA terminus of tRNAs; can also add nucleotides to the ends of RNA molecules by using nucleoside diphosphates as substrates, but this may not be physiologically important. Probably plays a role in initiation of 16S rRNA degradation (leading to ribosome degradation) during starvation. This chain is Ribonuclease PH, found in Xylella fastidiosa (strain M23).